The sequence spans 400 residues: Phosphoglycerate kinase (400 aa).

Substrate is bound by residues 19 to 21, arginine 38, 61 to 64, arginine 124, and arginine 161; these read DLN and HLGR. ATP contacts are provided by residues lysine 211, glycine 299, glutamate 330, and 356-359; that span reads GGDS.

This sequence belongs to the phosphoglycerate kinase family. In terms of assembly, monomer.

The protein localises to the cytoplasm. The enzyme catalyses (2R)-3-phosphoglycerate + ATP = (2R)-3-phospho-glyceroyl phosphate + ADP. The protein operates within carbohydrate degradation; glycolysis; pyruvate from D-glyceraldehyde 3-phosphate: step 2/5. This Parafrankia sp. (strain EAN1pec) protein is Phosphoglycerate kinase.